A 466-amino-acid chain; its full sequence is Exodeoxyribonuclease 7 large subunit (466 aa).

The protein belongs to the XseA family. In terms of assembly, heterooligomer composed of large and small subunits.

It localises to the cytoplasm. The catalysed reaction is Exonucleolytic cleavage in either 5'- to 3'- or 3'- to 5'-direction to yield nucleoside 5'-phosphates.. Functionally, bidirectionally degrades single-stranded DNA into large acid-insoluble oligonucleotides, which are then degraded further into small acid-soluble oligonucleotides. This Ruthia magnifica subsp. Calyptogena magnifica protein is Exodeoxyribonuclease 7 large subunit.